The sequence spans 689 residues: DNA ligase (689 aa).

NAD(+) contacts are provided by residues 40–44, 89–90, and E121; these read DSEYD and SL. Catalysis depends on K123, which acts as the N6-AMP-lysine intermediate. NAD(+) is bound by residues R144, E179, K295, and K319. The Zn(2+) site is built by C413, C416, C431, and C437. Residues 610-689 form the BRCT domain; it reads REQSGLTDKI…EEWLTLIKNV (80 aa).

Belongs to the NAD-dependent DNA ligase family. LigA subfamily. The cofactor is Mg(2+). Mn(2+) serves as cofactor.

It catalyses the reaction NAD(+) + (deoxyribonucleotide)n-3'-hydroxyl + 5'-phospho-(deoxyribonucleotide)m = (deoxyribonucleotide)n+m + AMP + beta-nicotinamide D-nucleotide.. Functionally, DNA ligase that catalyzes the formation of phosphodiester linkages between 5'-phosphoryl and 3'-hydroxyl groups in double-stranded DNA using NAD as a coenzyme and as the energy source for the reaction. It is essential for DNA replication and repair of damaged DNA. This is DNA ligase from Rickettsia conorii (strain ATCC VR-613 / Malish 7).